Here is a 153-residue protein sequence, read N- to C-terminus: Small ribosomal subunit protein bS16 (153 aa).

Residues 114–153 (ENEPVGEAITPKKKKAKAEDAEAAADAPAEAAAESEAADK) are disordered. Low complexity predominate over residues 137–153 (AADAPAEAAAESEAADK).

Belongs to the bacterial ribosomal protein bS16 family.

This chain is Small ribosomal subunit protein bS16, found in Rhodococcus opacus (strain B4).